The chain runs to 258 residues: Snake venom serine protease PTLE1 (258 aa).

Positions 1–18 (MVLIRVLANLLILQLSYA) are cleaved as a signal peptide. Residues 19-24 (QKSSEL) constitute a propeptide that is removed on maturation. In terms of domain architecture, Peptidase S1 spans 25-249 (VIGGDECNIN…YTDWIENIIA (225 aa)). Intrachain disulfides connect Cys-31/Cys-163, Cys-50/Cys-66, Cys-98/Cys-256, Cys-142/Cys-210, Cys-174/Cys-189, and Cys-200/Cys-225. N-linked (GlcNAc...) asparagine glycosylation is present at Asn-44. His-65 serves as the catalytic Charge relay system. Asn-79 and Asn-103 each carry an N-linked (GlcNAc...) asparagine glycan. The active-site Charge relay system is Asp-110. The N-linked (GlcNAc...) asparagine glycan is linked to Asn-121. The Charge relay system role is filled by Ser-204.

This sequence belongs to the peptidase S1 family. Snake venom subfamily. As to quaternary structure, monomer. As to expression, expressed by the venom gland.

It localises to the secreted. In terms of biological role, snake venom serine protease that may act in the hemostasis system of the prey. The polypeptide is Snake venom serine protease PTLE1 (Gloydius halys (Chinese water mocassin)).